The chain runs to 405 residues: Arginine deiminase (405 aa).

C395 serves as the catalytic Amidino-cysteine intermediate.

The protein belongs to the arginine deiminase family.

The protein localises to the cytoplasm. The catalysed reaction is L-arginine + H2O = L-citrulline + NH4(+). It participates in amino-acid degradation; L-arginine degradation via ADI pathway; carbamoyl phosphate from L-arginine: step 1/2. The protein is Arginine deiminase of Rhodococcus jostii (strain RHA1).